Reading from the N-terminus, the 736-residue chain is Catalase-peroxidase 2 (736 aa).

The tryptophyl-tyrosyl-methioninium (Trp-Tyr) (with M-253) cross-link spans 91–227; that stretch reads WHSAGTYRMG…LAAVQMGLIY (137 aa). Catalysis depends on His92, which acts as the Proton acceptor. Residues 227-253 constitute a cross-link (tryptophyl-tyrosyl-methioninium (Tyr-Met) (with W-91)); the sequence is YVNPEGPDGNPDPVAAAYDIREVFGRM. His268 is a heme b binding site.

This sequence belongs to the peroxidase family. Peroxidase/catalase subfamily. Homodimer or homotetramer. It depends on heme b as a cofactor. Formation of the three residue Trp-Tyr-Met cross-link is important for the catalase, but not the peroxidase activity of the enzyme.

The enzyme catalyses H2O2 + AH2 = A + 2 H2O. The catalysed reaction is 2 H2O2 = O2 + 2 H2O. In terms of biological role, bifunctional enzyme with both catalase and broad-spectrum peroxidase activity. Shows peroxidase specificity towards odianisidine, ABTS and pyrogallol, but methoxyphenol and 2-chloronaphthol are not peroxidized. The protein is Catalase-peroxidase 2 of Burkholderia cenocepacia (strain ATCC BAA-245 / DSM 16553 / LMG 16656 / NCTC 13227 / J2315 / CF5610) (Burkholderia cepacia (strain J2315)).